The chain runs to 636 residues: Chaperone protein DnaK (636 aa).

At Thr-197 the chain carries Phosphothreonine; by autocatalysis. Over residues 596-607 (LYQQAQEQQQSG) the composition is skewed to low complexity. The segment at 596 to 636 (LYQQAQEQQQSGSSGGSSDEDVVEDAEIVDEEDEEKRDDNR) is disordered. Acidic residues predominate over residues 613–636 (SDEDVVEDAEIVDEEDEEKRDDNR).

This sequence belongs to the heat shock protein 70 family.

In terms of biological role, acts as a chaperone. This Rubrobacter xylanophilus (strain DSM 9941 / JCM 11954 / NBRC 16129 / PRD-1) protein is Chaperone protein DnaK.